We begin with the raw amino-acid sequence, 191 residues long: Probable DNA-directed RNA polymerase subunit delta (191 aa).

Residues 14-83 enclose the HTH HARE-type domain; it reads LSMIEVARAI…GENKWGLRSW (70 aa). 2 stretches are compositionally biased toward acidic residues: residues 117–136 and 142–191; these read GDED…DFTE and EYDE…EEEV. The segment at 117–191 is disordered; sequence GDEDAIDYND…DEEEEEEEEV (75 aa).

It belongs to the RpoE family. In terms of assembly, RNAP is composed of a core of 2 alpha, a beta and a beta' subunits. The core is associated with a delta subunit and one of several sigma factors.

In terms of biological role, participates in both the initiation and recycling phases of transcription. In the presence of the delta subunit, RNAP displays an increased specificity of transcription, a decreased affinity for nucleic acids, and an increased efficiency of RNA synthesis because of enhanced recycling. The polypeptide is Probable DNA-directed RNA polymerase subunit delta (Streptococcus agalactiae serotype Ia (strain ATCC 27591 / A909 / CDC SS700)).